The primary structure comprises 493 residues: Ketol-acid reductoisomerase (NADP(+)) (493 aa).

Residues 14 to 208 (LDQLGRCRFM…GGDRAGVLES (195 aa)) enclose the KARI N-terminal Rossmann domain. Residues 45-48 (CGAQ), arginine 68, arginine 76, serine 78, and 108-110 (DKQ) contribute to the NADP(+) site. Histidine 132 is an active-site residue. Glycine 158 serves as a coordination point for NADP(+). KARI C-terminal knotted domains are found at residues 209-345 (SFVA…APKA) and 346-486 (DGIK…MTDM). The Mg(2+) site is built by aspartate 217, glutamate 221, glutamate 390, and glutamate 394. Serine 415 provides a ligand contact to substrate.

Belongs to the ketol-acid reductoisomerase family. Mg(2+) is required as a cofactor.

The catalysed reaction is (2R)-2,3-dihydroxy-3-methylbutanoate + NADP(+) = (2S)-2-acetolactate + NADPH + H(+). The enzyme catalyses (2R,3R)-2,3-dihydroxy-3-methylpentanoate + NADP(+) = (S)-2-ethyl-2-hydroxy-3-oxobutanoate + NADPH + H(+). The protein operates within amino-acid biosynthesis; L-isoleucine biosynthesis; L-isoleucine from 2-oxobutanoate: step 2/4. It functions in the pathway amino-acid biosynthesis; L-valine biosynthesis; L-valine from pyruvate: step 2/4. Its function is as follows. Involved in the biosynthesis of branched-chain amino acids (BCAA). Catalyzes an alkyl-migration followed by a ketol-acid reduction of (S)-2-acetolactate (S2AL) to yield (R)-2,3-dihydroxy-isovalerate. In the isomerase reaction, S2AL is rearranged via a Mg-dependent methyl migration to produce 3-hydroxy-3-methyl-2-ketobutyrate (HMKB). In the reductase reaction, this 2-ketoacid undergoes a metal-dependent reduction by NADPH to yield (R)-2,3-dihydroxy-isovalerate. This is Ketol-acid reductoisomerase (NADP(+)) from Mannheimia succiniciproducens (strain KCTC 0769BP / MBEL55E).